Here is a 501-residue protein sequence, read N- to C-terminus: Acid-sensing ion channel 1A (501 aa).

Residues 1–54 are Cytoplasmic-facing; it reads MKTSVMDLKVEPMDIDFDQPPPLQVFAHTSTLHGISHIFSYEKITAKCCLWVVF. A helical transmembrane segment spans residues 55–71; that stretch reads FLSSLTFLMYVCIDRIQ. Residues 72-429 are Extracellular-facing; sequence FYLEYPHVTK…ETIEQRKAYE (358 aa). Disulfide bonds link cysteine 98/cysteine 199, cysteine 177/cysteine 184, cysteine 294/cysteine 369, cysteine 312/cysteine 365, cysteine 316/cysteine 363, cysteine 325/cysteine 347, and cysteine 327/cysteine 339. N-linked (GlcNAc...) asparagine glycosylation is present at asparagine 164. A glycan (N-linked (GlcNAc...) asparagine) is linked at asparagine 370. The discontinuously helical transmembrane segment at 430–460 threads the bilayer; the sequence is VAGLLGDIGGQMGLFIGASILTILELFDYLY. The GAS motif; ion selectivity filter signature appears at 446–448; the sequence is GAS. Over 461 to 501 the chain is Cytoplasmic; sequence EVMKYRLCRCSNKKHHNNNNNTDHNAVFSLDDVNCHVSKFH.

This sequence belongs to the amiloride-sensitive sodium channel (TC 1.A.6) family. ASIC1 subfamily. In terms of assembly, homotrimer. Heterotrimer; with other ASIC proteins producing channel with different properties. Interacts with asic1c. As to expression, expressed in central nervous system. Faintly expressed in the trunk, presumably in dorsal root ganglia.

The protein resides in the cell membrane. It is found in the postsynaptic cell membrane. It localises to the cell projection. Its subcellular location is the dendrite. It carries out the reaction Na(+)(in) = Na(+)(out). It catalyses the reaction K(+)(in) = K(+)(out). The enzyme catalyses Li(+)(in) = Li(+)(out). The catalysed reaction is Ca(2+)(in) = Ca(2+)(out). Its activity is regulated as follows. Inhibited by the diuretic drug amiloride. Functionally, forms voltage-independent, pH-gated trimeric sodium channels that act as postsynaptic excitatory receptors in the nervous system, playing a crucial role in regulating synaptic plasticity, learning, and memory. Upon extracellular pH drop this channel elicits transient, fast activating, and completely desensitizing inward currents. Displays high selectivity for sodium ions but can also permit the permeation of other cations. This Danio rerio (Zebrafish) protein is Acid-sensing ion channel 1A (asic1a).